Here is a 209-residue protein sequence, read N- to C-terminus: Uracil phosphoribosyltransferase (209 aa).

Residues Arg78, Arg103, and 130–138 (DPMLATAGS) each bind 5-phospho-alpha-D-ribose 1-diphosphate. Residues Ile193 and 198–200 (GDA) contribute to the uracil site. Position 199 (Asp199) interacts with 5-phospho-alpha-D-ribose 1-diphosphate.

The protein belongs to the UPRTase family. Requires Mg(2+) as cofactor.

It carries out the reaction UMP + diphosphate = 5-phospho-alpha-D-ribose 1-diphosphate + uracil. It functions in the pathway pyrimidine metabolism; UMP biosynthesis via salvage pathway; UMP from uracil: step 1/1. Allosterically activated by GTP. In terms of biological role, catalyzes the conversion of uracil and 5-phospho-alpha-D-ribose 1-diphosphate (PRPP) to UMP and diphosphate. This Methylibium petroleiphilum (strain ATCC BAA-1232 / LMG 22953 / PM1) protein is Uracil phosphoribosyltransferase.